Here is a 609-residue protein sequence, read N- to C-terminus: Glutamine--fructose-6-phosphate aminotransferase [isomerizing] (609 aa).

Cys2 acts as the Nucleophile; for GATase activity in catalysis. Residues 2-218 form the Glutamine amidotransferase type-2 domain; it reads CGIVGAVAQR…EGDVVEVTRR (217 aa). 2 consecutive SIS domains span residues 286 to 426 and 458 to 599; these read ADAL…LKGA and LAEG…VDQP. The active-site For Fru-6P isomerization activity is the Lys604.

In terms of assembly, homodimer.

It localises to the cytoplasm. It catalyses the reaction D-fructose 6-phosphate + L-glutamine = D-glucosamine 6-phosphate + L-glutamate. Its function is as follows. Catalyzes the first step in hexosamine metabolism, converting fructose-6P into glucosamine-6P using glutamine as a nitrogen source. The sequence is that of Glutamine--fructose-6-phosphate aminotransferase [isomerizing] from Yersinia pestis.